Consider the following 379-residue polypeptide: Cytochrome b (379 aa).

Transmembrane regions (helical) follow at residues 33 to 53 (FGSLLGMCLVIQILTGLFLAM), 77 to 98 (WLIRYLHANGASMFFICLFIHV), 113 to 133 (WNIGIILLLTTMATAFVGYVL), and 178 to 198 (FFAFHFILPFIIAAFALVHLL). Heme b contacts are provided by histidine 83 and histidine 97. Heme b-binding residues include histidine 182 and histidine 196. A ubiquinone is bound at residue histidine 201. 4 consecutive transmembrane segments (helical) span residues 226–246 (IKDLLGIFLLLLILMALALFF), 288–308 (LGGVLALILSILILAAFPLLN), 320–340 (VTQTIYWIFIANLLVLTWIGG), and 347–367 (FTMIGQIASVTYFTIITILIP).

It belongs to the cytochrome b family. The cytochrome bc1 complex contains 11 subunits: 3 respiratory subunits (MT-CYB, CYC1 and UQCRFS1), 2 core proteins (UQCRC1 and UQCRC2) and 6 low-molecular weight proteins (UQCRH/QCR6, UQCRB/QCR7, UQCRQ/QCR8, UQCR10/QCR9, UQCR11/QCR10 and a cleavage product of UQCRFS1). This cytochrome bc1 complex then forms a dimer. It depends on heme b as a cofactor.

It localises to the mitochondrion inner membrane. Component of the ubiquinol-cytochrome c reductase complex (complex III or cytochrome b-c1 complex) that is part of the mitochondrial respiratory chain. The b-c1 complex mediates electron transfer from ubiquinol to cytochrome c. Contributes to the generation of a proton gradient across the mitochondrial membrane that is then used for ATP synthesis. In Akodon philipmyersi (Myers' grass mouse), this protein is Cytochrome b (MT-CYB).